The chain runs to 291 residues: Trimeric intracellular cation channel type B (291 aa).

The Lumenal segment spans residues 1–19 (MDSPWDELALAFSRTSMFP). Residues 20 to 33 (FFDIAHYLVSVMAV) form a helical membrane-spanning segment. Over 34–50 (KRQPGAAALAWKNPISS) the chain is Cytoplasmic. Residues 51 to 70 (WFTAMLHCFGGGILSCLLLA) form a helical membrane-spanning segment. Over 71–82 (EPPLKFLANHTN) the chain is Lumenal. Residues 83–99 (ILLASSIWYITFFCPHD) form a helical membrane-spanning segment. The Cytoplasmic segment spans residues 100–104 (LVSQG). Residues 105-121 (YSYLPVQLLASGMKEVT) traverse the membrane as a helical segment. Residues Lys-118 and Arg-122 each coordinate a 1,2-diacyl-sn-glycero-3-phospho-(1D-myo-inositol-4,5-bisphosphate). Topologically, residues 122–139 (RTWKIVGGVTHANSYYKN) are lumenal. The chain crosses the membrane as a helical span at residues 140–156 (GWIVMIAIGWARGAGGT). The Cytoplasmic portion of the chain corresponds to 157–179 (IITNFERLVKGDWKPEGDEWLKM). Residues 180-195 (SYPAKVTLLGSVIFTF) traverse the membrane as a helical segment. Residues 196–207 (QHTQHLAISKHN) are Lumenal-facing. A helical transmembrane segment spans residues 208–227 (LMFLYTIFIVATKITMMTTQ). Residues 228 to 291 (TSTMTFAPFE…VKKKHTKKNE (64 aa)) lie on the Cytoplasmic side of the membrane. A disordered region spans residues 256 to 291 (KKSEAKSPSNGVGSLASKPVDVASDNVKKKHTKKNE). Ser-262 bears the Phosphoserine mark.

This sequence belongs to the TMEM38 family. Homotrimer; conformation seems to be controled by binding to diacylglycerol (DAG).

It is found in the endoplasmic reticulum membrane. The enzyme catalyses K(+)(in) = K(+)(out). Its activity is regulated as follows. Channel activity is activated by increased cytosolic Ca(2+) levels and blocked by luminal high Ca(2+) levels. In terms of biological role, intracellular monovalent cation channel required for maintenance of rapid intracellular calcium release. Acts as a potassium counter-ion channel that functions in synchronization with calcium release from intracellular stores. Activated by increased cytosolic Ca(2+) levels. This is Trimeric intracellular cation channel type B from Homo sapiens (Human).